We begin with the raw amino-acid sequence, 261 residues long: Precorrin-6A synthase [deacetylating] (261 aa).

It catalyses the reaction precorrin-5 + S-adenosyl-L-methionine + H2O = precorrin-6A + acetate + S-adenosyl-L-homocysteine + 2 H(+). It functions in the pathway cofactor biosynthesis; adenosylcobalamin biosynthesis; cob(II)yrinate a,c-diamide from precorrin-2 (aerobic route): step 5/10. Functionally, catalyzes the methylation of C-1 in precorrin-5 and the subsequent extrusion of acetic acid from the resulting intermediate to form cobalt-precorrin-6A. The sequence is that of Precorrin-6A synthase [deacetylating] (cobF) from Sinorhizobium sp.